The following is a 67-amino-acid chain: MARITVEDCLEQIPNRFQLVLAATYRARMLSQGHTPRIETKNKPGVTALREIAEGKVGLEMLKKVPG.

It belongs to the RNA polymerase subunit omega family. In terms of assembly, the RNAP catalytic core consists of 2 alpha, 1 beta, 1 beta' and 1 omega subunit. When a sigma factor is associated with the core the holoenzyme is formed, which can initiate transcription.

It carries out the reaction RNA(n) + a ribonucleoside 5'-triphosphate = RNA(n+1) + diphosphate. Functionally, promotes RNA polymerase assembly. Latches the N- and C-terminal regions of the beta' subunit thereby facilitating its interaction with the beta and alpha subunits. The chain is DNA-directed RNA polymerase subunit omega from Delftia acidovorans (strain DSM 14801 / SPH-1).